Reading from the N-terminus, the 363-residue chain is Probable matrix metalloproteinase 095L (363 aa).

Positions 1 to 25 are cleaved as a signal peptide; sequence MSVDSFTSRLAVVMTAVVLVWWAQA. A propeptide spans 26 to 126 (activation peptide); that stretch reads LPVPSPRRGE…PRCGVPDVSK (101 aa). Positions 117-124 match the Cysteine switch motif; that stretch reads PRCGVPDV. Residues Cys119 and His275 each coordinate Zn(2+). Glu276 is an active-site residue. The Zn(2+) site is built by His279 and His285.

This sequence belongs to the peptidase M10A family. It depends on Zn(2+) as a cofactor.

It is found in the secreted. In terms of biological role, probable endopeptidase. The polypeptide is Probable matrix metalloproteinase 095L (Aedes vexans (Inland floodwater mosquito)).